A 208-amino-acid chain; its full sequence is ATP-dependent Clp protease proteolytic subunit (208 aa).

Serine 105 (nucleophile) is an active-site residue. Histidine 130 is an active-site residue.

Belongs to the peptidase S14 family. As to quaternary structure, fourteen ClpP subunits assemble into 2 heptameric rings which stack back to back to give a disk-like structure with a central cavity, resembling the structure of eukaryotic proteasomes.

The protein localises to the cytoplasm. The catalysed reaction is Hydrolysis of proteins to small peptides in the presence of ATP and magnesium. alpha-casein is the usual test substrate. In the absence of ATP, only oligopeptides shorter than five residues are hydrolyzed (such as succinyl-Leu-Tyr-|-NHMec, and Leu-Tyr-Leu-|-Tyr-Trp, in which cleavage of the -Tyr-|-Leu- and -Tyr-|-Trp bonds also occurs).. Its function is as follows. Cleaves peptides in various proteins in a process that requires ATP hydrolysis. Has a chymotrypsin-like activity. Plays a major role in the degradation of misfolded proteins. The sequence is that of ATP-dependent Clp protease proteolytic subunit from Xylella fastidiosa (strain M12).